Here is a 352-residue protein sequence, read N- to C-terminus: Iron-sulfur cluster carrier protein (352 aa).

Gly114–Ser121 provides a ligand contact to ATP.

This sequence belongs to the Mrp/NBP35 ATP-binding proteins family. Homodimer. Interacts with BrxC.

Its function is as follows. Binds and transfers iron-sulfur (Fe-S) clusters to target apoproteins. Can hydrolyze ATP. In terms of biological role, negatively regulates the expression of hpr/scoC. The effect on hpr/scoC may be indirect. This is Iron-sulfur cluster carrier protein (salA) from Bacillus subtilis (strain 168).